A 506-amino-acid polypeptide reads, in one-letter code: Xaa-Pro aminopeptidase 3 (506 aa).

The N-terminal 31 residues, 1 to 31 (MLSLLSTPRLVPVIARLRGLSGCMSCLQRRY), are a transit peptide targeting the mitochondrion. The interaction with TNFRSF1B stretch occupies residues 54–79 (HPHLLRPGEVTPGLSQVEYALRRHKL). Positions 300, 331, 342, 423, 430, 450, and 474 each coordinate substrate. Mn(2+)-binding residues include Asp331, Asp342, and His423. Residues Glu450 and Glu474 each coordinate Mn(2+).

Belongs to the peptidase M24B family. As to quaternary structure, homodimer. Interacts with TNFRSF1B/TNFR2 (activated) and TRAF2. The cofactor is Mn(2+). In terms of tissue distribution, expressed in the kidney, specifically in intercalated cells, but not in principal cells, of the distal convoluted tubule and cortical collecting duct (at protein level).

Its subcellular location is the mitochondrion. It is found in the cytoplasm. It carries out the reaction Release of any N-terminal amino acid, including proline, that is linked to proline, even from a dipeptide or tripeptide.. Catalyzes the removal of a penultimate prolyl residue from the N-termini of peptides, such as Leu-Pro-Ala. Also shows low activity towards peptides with Ala or Ser at the P1 position. Promotes TNFRSF1B-mediated phosphorylation of MAPK8/JNK1 and MAPK9/JNK2, suggesting a function as an adapter protein for TNFRSF1B; the effect is independent of XPNPEP3 peptidase activity. May inhibit apoptotic cell death induced via TNF-TNFRSF1B signaling. The sequence is that of Xaa-Pro aminopeptidase 3 (Xpnpep3) from Rattus norvegicus (Rat).